Here is a 491-residue protein sequence, read N- to C-terminus: Chromosomal replication initiator protein DnaA (491 aa).

The interval 1-69 (MTTWDKCLKK…TIQECHGNDL (69 aa)) is domain I, interacts with DnaA modulators. Residues 69-154 (LIIEYSNKKF…KEDEEYSFGL (86 aa)) are domain II. The segment at 155–371 (PLKEKYVFDS…GALNRVLTTS (217 aa)) is domain III, AAA+ region. Residues G199, G201, K202, and T203 each coordinate ATP. Residues 372–491 (KFNHKDPTIE…YELLLDKISR (120 aa)) form a domain IV, binds dsDNA region.

Belongs to the DnaA family. Oligomerizes as a right-handed, spiral filament on DNA at oriC.

The protein resides in the cytoplasm. Functionally, plays an essential role in the initiation and regulation of chromosomal replication. ATP-DnaA binds to the origin of replication (oriC) to initiate formation of the DNA replication initiation complex once per cell cycle. Binds the DnaA box (a 9 base pair repeat at the origin) and separates the double-stranded (ds)DNA. Forms a right-handed helical filament on oriC DNA; dsDNA binds to the exterior of the filament while single-stranded (ss)DNA is stabiized in the filament's interior. The ATP-DnaA-oriC complex binds and stabilizes one strand of the AT-rich DNA unwinding element (DUE), permitting loading of DNA polymerase. After initiation quickly degrades to an ADP-DnaA complex that is not apt for DNA replication. Binds acidic phospholipids. The sequence is that of Chromosomal replication initiator protein DnaA from Francisella tularensis subsp. holarctica (strain OSU18).